Reading from the N-terminus, the 106-residue chain is uncharacterized protein (106 aa).

The HTH hxlR-type domain occupies 1 to 93 (MSIFYVLGKK…WEAKWKEAKI (93 aa)).

This is an uncharacterized protein from Methanocaldococcus jannaschii (strain ATCC 43067 / DSM 2661 / JAL-1 / JCM 10045 / NBRC 100440) (Methanococcus jannaschii).